A 190-amino-acid chain; its full sequence is Potassium-transporting ATPase KdpC subunit (190 aa).

Residues 10–30 (VLFAVLTLICGVIYPYAITGI) traverse the membrane as a helical segment.

It belongs to the KdpC family. In terms of assembly, the system is composed of three essential subunits: KdpA, KdpB and KdpC.

Its subcellular location is the cell inner membrane. In terms of biological role, part of the high-affinity ATP-driven potassium transport (or Kdp) system, which catalyzes the hydrolysis of ATP coupled with the electrogenic transport of potassium into the cytoplasm. This subunit acts as a catalytic chaperone that increases the ATP-binding affinity of the ATP-hydrolyzing subunit KdpB by the formation of a transient KdpB/KdpC/ATP ternary complex. This is Potassium-transporting ATPase KdpC subunit from Herminiimonas arsenicoxydans.